We begin with the raw amino-acid sequence, 177 residues long: Anti-apoptotic protein NR13 (177 aa).

The BH1 signature appears at 75 to 94 (LETDGGLNWGRLLALVVFAG). A helical transmembrane segment spans residues 86–106 (LLALVVFAGTLAAALAESACE). Positions 126–141 (EWMEEHGGWDGFCRFF) match the BH2 motif. The chain crosses the membrane as a helical span at residues 156–176 (SNAIMAAAGFGIAGLAFLLVV).

It belongs to the Bcl-2 family. Interacts with BAX. Mainly expressed in neural and muscular tissues.

Its subcellular location is the cell membrane. Its function is as follows. Shows anti-apoptotic properties. Counteract the pro-apoptotic activity of BAX. The protein is Anti-apoptotic protein NR13 (NR13) of Coturnix japonica (Japanese quail).